Here is a 63-residue protein sequence, read N- to C-terminus: UPF0434 protein Sde_1297 (63 aa).

Belongs to the UPF0434 family.

The polypeptide is UPF0434 protein Sde_1297 (Saccharophagus degradans (strain 2-40 / ATCC 43961 / DSM 17024)).